A 432-amino-acid polypeptide reads, in one-letter code: MKFKSELEQAIIATVQQEVVPALGCTEPVSLALAAAVARQYLGALPDRIEAKVSPNLMKNGMGVTVPGTGTVGLTMAAAIGAIGGDPNGGLEVLKHITNEQVAQAKQMIHDHKIEVSISDTEHILYSEATLFNADQQVKVRIAAHHTNVIYIEKNGELLFSKPCVVESENAENVFANLNAKDIYDFSLNVELEKIRFIQQAAILNSALSQEGLNQDYGLHIGRTLQKQIGKGLISDDLLNRIVIETTAASDARMGGANLPAMSNSGSGNQGITATMPVVVVARHLVASEEQLIRALFLSHLMAIYIHSKLPKLSALCAVTTAAMGSCAGVAWLLTGKFEAISMAISSMIGDISGIICDGAANSCAMKVSTSVSSSYKSILMALDDTQVTGNEGIVEHQIDRSINNLCAIASRSMQYTDRQVIEIMVSKPKSL.

The protein belongs to the UPF0597 family.

The chain is UPF0597 protein APJL_1638 from Actinobacillus pleuropneumoniae serotype 3 (strain JL03).